Reading from the N-terminus, the 363-residue chain is Zinc finger CCCH domain-containing protein 53 (363 aa).

The C3H1-type zinc finger occupies 154-181 (KNRPKICSFYTIGQCKRGAECSFRHEMP). Residues 225–310 (KTLYVGGLNS…PPNEYSHYPS (86 aa)) form the RRM domain. Positions 281–348 (LISQQQNQHS…SYSYPMPPHQ (68 aa)) are disordered. Residues 283–297 (SQQQNQHSQMQQYYM) are compositionally biased toward low complexity. A compositionally biased stretch (polar residues) spans 320-336 (FSTQESDGSSTSENNRA).

This Arabidopsis thaliana (Mouse-ear cress) protein is Zinc finger CCCH domain-containing protein 53.